A 429-amino-acid chain; its full sequence is Glucose-1-phosphate adenylyltransferase (429 aa).

Residues Gly-162, 177–178 (EK), and Ser-209 contribute to the alpha-D-glucose 1-phosphate site.

It belongs to the bacterial/plant glucose-1-phosphate adenylyltransferase family. In terms of assembly, homotetramer.

It catalyses the reaction alpha-D-glucose 1-phosphate + ATP + H(+) = ADP-alpha-D-glucose + diphosphate. Its pathway is glycan biosynthesis; glycogen biosynthesis. In terms of biological role, involved in the biosynthesis of ADP-glucose, a building block required for the elongation reactions to produce glycogen. Catalyzes the reaction between ATP and alpha-D-glucose 1-phosphate (G1P) to produce pyrophosphate and ADP-Glc. The protein is Glucose-1-phosphate adenylyltransferase of Picosynechococcus sp. (strain ATCC 27264 / PCC 7002 / PR-6) (Agmenellum quadruplicatum).